The chain runs to 606 residues: Methionine--tRNA ligase (606 aa).

The 'HIGH' region motif lies at 14–24 (PYANGPRHIGH). Zn(2+) contacts are provided by Cys-146, Cys-149, Cys-159, and Cys-162. A 'KMSKS' region motif is present at residues 351–355 (KFSSS). Residue Ser-354 participates in ATP binding.

Belongs to the class-I aminoacyl-tRNA synthetase family. MetG type 1 subfamily. In terms of assembly, monomer. The cofactor is Zn(2+).

The protein resides in the cytoplasm. The enzyme catalyses tRNA(Met) + L-methionine + ATP = L-methionyl-tRNA(Met) + AMP + diphosphate. Its function is as follows. Is required not only for elongation of protein synthesis but also for the initiation of all mRNA translation through initiator tRNA(fMet) aminoacylation. The polypeptide is Methionine--tRNA ligase (Thermobifida fusca (strain YX)).